The following is a 307-amino-acid chain: Ribonuclease Z (307 aa).

Zn(2+) is bound by residues His-63, His-65, Asp-67, His-68, His-141, Asp-212, and His-270. The active-site Proton acceptor is the Asp-67.

The protein belongs to the RNase Z family. Homodimer. Zn(2+) is required as a cofactor.

It catalyses the reaction Endonucleolytic cleavage of RNA, removing extra 3' nucleotides from tRNA precursor, generating 3' termini of tRNAs. A 3'-hydroxy group is left at the tRNA terminus and a 5'-phosphoryl group is left at the trailer molecule.. In terms of biological role, zinc phosphodiesterase, which displays some tRNA 3'-processing endonuclease activity. Probably involved in tRNA maturation, by removing a 3'-trailer from precursor tRNA. This Bacillus anthracis (strain A0248) protein is Ribonuclease Z.